Consider the following 349-residue polypeptide: Core protein VP7 (349 aa).

N-linked (GlcNAc...) asparagine; by host glycans are attached at residues asparagine 193 and asparagine 287.

Belongs to the orbivirus VP7 family. In terms of assembly, homotrimer that assemble in a complex of 260 capsomers on an inner scaffold composed of VP3.

The protein resides in the virion. Functionally, the VP7 protein is one of the five proteins (with VP1, VP3, VP4, and VP6) which form the inner capsid of the virus. This Antilocapra americana (Pronghorn) protein is Core protein VP7 (Segment-7).